Reading from the N-terminus, the 452-residue chain is Probable intron-encoded endonuclease 2 (452 aa).

3 helical membrane passes run 1 to 21, 22 to 42, and 57 to 77; these read MNIT…NRKN, IILM…LILV, and IYII…LVAF. The interval 1–80 is ndh-4L exon 1 encoded; sequence MNITLILFLI…LAILVAFYRL (80 aa). The interval 81–452 is ndh-4L intron 1 encoded; that stretch reads INSPVKNPRS…SLEGGMNKNI (372 aa).

The protein in the N-terminal section; belongs to the complex I subunit 4L family. In the C-terminal section; belongs to the LAGLIDADG endonuclease family.

The protein resides in the mitochondrion membrane. Mitochondrial DNA endonuclease involved in intron homing. This Neurospora crassa (strain ATCC 24698 / 74-OR23-1A / CBS 708.71 / DSM 1257 / FGSC 987) protein is Probable intron-encoded endonuclease 2.